A 619-amino-acid chain; its full sequence is Zinc finger and BTB domain-containing protein 7C (619 aa).

The region spanning 34–101 is the BTB domain; it reads CDVLLVVQEQ…AYTSTLTITA (68 aa). The tract at residues 129–218 is disordered; that stretch reads PGGDGGEEDD…DSFQAGSPGH (90 aa). Residues 133-173 are compositionally biased toward acidic residues; the sequence is GGEEDDKEDDDDDEDDDDEEDEEEEEEEEEDDDDDTEDFAD. The span at 191–208 shows a compositional bias: basic and acidic residues; sequence KTDHLTEKAYSDTPRDFP. 3 consecutive C2H2-type zinc fingers follow at residues 364-386, 392-414, and 420-442; these read QQCPICHKVIMGAGKLPRHMRTH, YMCTICEVRFTRQDKLKIHMRKH, and YLCIHCNAKFVHNYDLKNHMRIH. A C2H2-type 4; degenerate zinc finger spans residues 448-478; it reads YQCEFCYKSFTRSDHLHRHIKRQSCRMARPR.

In terms of tissue distribution, detected in normal cervical keratinocytes, and in some cervical carcinoma cell lines.

In terms of biological role, may be a tumor suppressor gene. The protein is Zinc finger and BTB domain-containing protein 7C (ZBTB7C) of Homo sapiens (Human).